We begin with the raw amino-acid sequence, 276 residues long: Outer membrane lipoprotein 2 (276 aa).

The N-terminal stretch at 1–19 is a signal peptide; that stretch reads MNFKKLLGVALVSALALTA. Cysteine 20 is lipidated: N-palmitoyl cysteine. A lipid anchor (S-diacylglycerol cysteine) is attached at cysteine 20.

The protein belongs to the NlpA lipoprotein family.

It localises to the cell outer membrane. The chain is Outer membrane lipoprotein 2 (plpB) from Mannheimia haemolytica (Pasteurella haemolytica).